Here is a 623-residue protein sequence, read N- to C-terminus: V-type proton ATPase catalytic subunit A (623 aa).

Residue 252-259 coordinates ATP; that stretch reads GAFGCGKT.

Belongs to the ATPase alpha/beta chains family. As to quaternary structure, V-ATPase is a heteromultimeric enzyme composed of a peripheral catalytic V1 complex (components A to H) attached to an integral membrane V0 proton pore complex (components: a, c, c'', d and e). Binds to the deubiquitinating enzyme AMSH3.

It is found in the vacuole membrane. It catalyses the reaction ATP + H2O + 4 H(+)(in) = ADP + phosphate + 5 H(+)(out). In terms of biological role, catalytic subunit of the peripheral V1 complex of vacuolar ATPase. V-ATPase vacuolar ATPase is responsible for acidifying a variety of intracellular compartments in eukaryotic cells. This is V-type proton ATPase catalytic subunit A (VHA-A) from Arabidopsis thaliana (Mouse-ear cress).